A 95-amino-acid chain; its full sequence is Protein TusB (95 aa).

The protein belongs to the DsrH/TusB family. In terms of assembly, heterohexamer, formed by a dimer of trimers. The hexameric TusBCD complex contains 2 copies each of TusB, TusC and TusD. The TusBCD complex interacts with TusE.

The protein localises to the cytoplasm. Its function is as follows. Part of a sulfur-relay system required for 2-thiolation of 5-methylaminomethyl-2-thiouridine (mnm(5)s(2)U) at tRNA wobble positions. This chain is Protein TusB, found in Escherichia coli O81 (strain ED1a).